Consider the following 302-residue polypeptide: NAD kinase 2 (302 aa).

The Proton acceptor role is filled by Asp-78. NAD(+) is bound by residues 78 to 79 (DG), 152 to 153 (NE), Asp-182, and 193 to 198 (TAYSLS).

It belongs to the NAD kinase family. The cofactor is a divalent metal cation.

The protein resides in the cytoplasm. It carries out the reaction NAD(+) + ATP = ADP + NADP(+) + H(+). Its function is as follows. Involved in the regulation of the intracellular balance of NAD and NADP, and is a key enzyme in the biosynthesis of NADP. Catalyzes specifically the phosphorylation on 2'-hydroxyl of the adenosine moiety of NAD to yield NADP. In Prochlorococcus marinus (strain NATL2A), this protein is NAD kinase 2.